The chain runs to 83 residues: Putative protein T-ENOL (83 aa).

The tract at residues 1–33 is disordered; the sequence is MASTPMGNEGEKKSSWPSQAAPSLRGGPASLSR.

The chain is Putative protein T-ENOL from Homo sapiens (Human).